The chain runs to 658 residues: ATP-dependent RNA helicase DDX3Y (658 aa).

The disordered stretch occupies residues 1–143 (MSQVAAESTA…DWSKPLPPSE (143 aa)). Serine 2 bears the N-acetylserine mark. Positions 45 to 69 (RNRETSKGVCDKDSSGWSCSKDKDA) are enriched in basic and acidic residues. Lysine 56 is subject to N6-acetyllysine. Phosphoserine occurs at positions 86 and 90. The segment covering 94–129 (GRFDDHGRNDYDGIGGRDRTGFGKFERSGHSRWSDR) has biased composition (basic and acidic residues). At arginine 101 the chain carries Omega-N-methylarginine. The residue at position 104 (tyrosine 104) is a Phosphotyrosine. The residue at position 110 (arginine 110) is an Omega-N-methylarginine. Lysine 117 bears the N6-acetyllysine mark. Residues serine 130 and serine 182 each carry the phosphoserine modification. Positions 179-207 (ENFSDIEMGEIIMGNIELTRYTRPTPVQK) match the Q motif motif. 199–206 (YTRPTPVQ) serves as a coordination point for ATP. One can recognise a Helicase ATP-binding domain in the interval 210–402 (IPIIKEKRDL…RDFLDEYIFL (193 aa)). A Glycyl lysine isopeptide (Lys-Gly) (interchain with G-Cter in SUMO2) cross-link involves residue lysine 214. 223 to 230 (AQTGSGKT) is a binding site for ATP. Residues 346 to 349 (DEAD) carry the DEAD box motif. The 162-residue stretch at 413-574 (NITQKVVWVE…EVPSWLESMA (162 aa)) folds into the Helicase C-terminal domain. Serine 455 carries the phosphoserine modification. Arginine 590 carries the post-translational modification Omega-N-methylarginine. Serine 592 and serine 603 each carry phosphoserine. The tract at residues 597–627 (ARDYRQSSGSANAGFNSNRANSSRSSGSSHN) is disordered. Over residues 603-627 (SSGSANAGFNSNRANSSRSSGSSHN) the composition is skewed to low complexity. Arginine 615 and arginine 628 each carry omega-N-methylarginine.

The protein belongs to the DEAD box helicase family. DDX3/DED1 subfamily. In terms of tissue distribution, found in heart, brain, liver, skeletal muscle, kidney and testis. Low expression detected in lung. In testis, expressed in all types of spermatogenic cells including spermatogonia, spermatocytes, spermatids and somatic Sertoli cells within the seminiferous tubules. Also expressed in Leydig cells and other interstitial cells.

It is found in the cytoplasm. Its subcellular location is the nucleus. It carries out the reaction ATP + H2O = ADP + phosphate + H(+). In terms of biological role, probable ATP-dependent RNA helicase. During immune response, may enhance IFNB1 expression via IRF3/IRF7 pathway. The polypeptide is ATP-dependent RNA helicase DDX3Y (Ddx3y) (Mus musculus (Mouse)).